The chain runs to 1381 residues: DNA-directed RNA polymerase subunit beta'' (1381 aa).

Residues Cys224, Cys295, Cys302, and Cys305 each coordinate Zn(2+).

Belongs to the RNA polymerase beta' chain family. RpoC2 subfamily. In terms of assembly, in plastids the minimal PEP RNA polymerase catalytic core is composed of four subunits: alpha, beta, beta', and beta''. When a (nuclear-encoded) sigma factor is associated with the core the holoenzyme is formed, which can initiate transcription. The cofactor is Zn(2+).

The protein localises to the plastid. Its subcellular location is the chloroplast. It catalyses the reaction RNA(n) + a ribonucleoside 5'-triphosphate = RNA(n+1) + diphosphate. Functionally, DNA-dependent RNA polymerase catalyzes the transcription of DNA into RNA using the four ribonucleoside triphosphates as substrates. This chain is DNA-directed RNA polymerase subunit beta'', found in Guizotia abyssinica (Niger).